The sequence spans 140 residues: uncharacterized protein (140 aa).

14 repeat units span residues 1 to 10 (MFARLCPVSE), 11 to 20 (TFGRLCPVSE), 21 to 30 (TFARLCPVSE), 31 to 40 (TFARLCPVSE), 41 to 50 (TFARLCPVSE), 51 to 60 (TFGRLCPVSE), 61 to 70 (MFGRLSPVSE), 71 to 80 (TFGRLCPVSE), 81 to 90 (TFGRLCPVSE), 91 to 100 (MFARLCPVSE), 101 to 110 (TFGRLSPVSE), 111 to 120 (MFGRLCPVSE), 121 to 130 (MFGRLCPVSE), and 131 to 140 (MFGRLCPVIT). The interval 1–140 (MFARLCPVSE…MFGRLCPVIT (140 aa)) is 14 X 10 AA tandem repeats of [MT]-F-[AG]-R-L-[CS]-P-V-[SI]-[ET].

This is an uncharacterized protein from Homo sapiens (Human).